The following is a 30-amino-acid chain: Elongation factor 1-delta (30 aa).

It belongs to the EF-1-beta/EF-1-delta family. In terms of assembly, EF-1 is composed of 4 subunits: alpha, beta (1B-alpha=beta'), delta (1B-beta), and gamma (1B-gamma).

Its function is as follows. EF-1-beta and EF-1-delta stimulate the exchange of GDP bound to EF-1-alpha to GTP. This is Elongation factor 1-delta from Populus euphratica (Euphrates poplar).